Reading from the N-terminus, the 279-residue chain is NADPH-dependent 7-cyano-7-deazaguanine reductase (279 aa).

86 to 88 (IES) lines the substrate pocket. 88-89 (SK) is a binding site for NADPH. Cys-187 (thioimide intermediate) is an active-site residue. Asp-194 acts as the Proton donor in catalysis. 226 to 227 (HE) lines the substrate pocket. Residue 255-256 (RG) participates in NADPH binding.

The protein belongs to the GTP cyclohydrolase I family. QueF type 2 subfamily. Homodimer.

The protein localises to the cytoplasm. The catalysed reaction is 7-aminomethyl-7-carbaguanine + 2 NADP(+) = 7-cyano-7-deazaguanine + 2 NADPH + 3 H(+). It participates in tRNA modification; tRNA-queuosine biosynthesis. Catalyzes the NADPH-dependent reduction of 7-cyano-7-deazaguanine (preQ0) to 7-aminomethyl-7-deazaguanine (preQ1). The sequence is that of NADPH-dependent 7-cyano-7-deazaguanine reductase from Haemophilus influenzae (strain PittGG).